We begin with the raw amino-acid sequence, 424 residues long: Tyrosine--tRNA ligase (424 aa).

L-tyrosine is bound at residue tyrosine 37. Residues 42-51 (PTADSLHLGH) carry the 'HIGH' region motif. Lysine 144 bears the N6-acetyllysine mark. Residues tyrosine 175 and glutamine 179 each coordinate L-tyrosine. The 'KMSKS' region signature appears at 235–239 (KFGKT). Lysine 238 lines the ATP pocket. An S4 RNA-binding domain is found at 357 to 414 (ADLMQALVDSELQPSRGQARKTIASNAITINGEKQSDPEYFFKEEDRLFGRFTLLRRG).

This sequence belongs to the class-I aminoacyl-tRNA synthetase family. TyrS type 1 subfamily. In terms of assembly, homodimer.

The protein resides in the cytoplasm. The enzyme catalyses tRNA(Tyr) + L-tyrosine + ATP = L-tyrosyl-tRNA(Tyr) + AMP + diphosphate + H(+). Its function is as follows. Catalyzes the attachment of tyrosine to tRNA(Tyr) in a two-step reaction: tyrosine is first activated by ATP to form Tyr-AMP and then transferred to the acceptor end of tRNA(Tyr). The sequence is that of Tyrosine--tRNA ligase from Escherichia coli O8 (strain IAI1).